The sequence spans 346 residues: [LysW]-lysine/[LysW]-ornithine hydrolase (346 aa).

A Zn(2+)-binding site is contributed by histidine 67. The active site involves aspartate 69. A Zn(2+)-binding site is contributed by aspartate 91. The active-site Proton acceptor is glutamate 121. Residues glutamate 122, glutamate 145, and histidine 316 each contribute to the Zn(2+) site.

The protein belongs to the peptidase M20A family. LysK subfamily. Requires Zn(2+) as cofactor. The cofactor is Co(2+).

It localises to the cytoplasm. The enzyme catalyses [amino-group carrier protein]-C-terminal-gamma-(L-lysyl)-L-glutamate + H2O = [amino-group carrier protein]-C-terminal-L-glutamate + L-lysine. It carries out the reaction [amino-group carrier protein]-C-terminal-gamma-(L-ornithyl)-L-glutamate + H2O = [amino-group carrier protein]-C-terminal-L-glutamate + L-ornithine. It participates in amino-acid biosynthesis; L-lysine biosynthesis via AAA pathway; L-lysine from L-alpha-aminoadipate (Thermus route): step 5/5. Its pathway is amino-acid biosynthesis; L-arginine biosynthesis. In terms of biological role, catalyzes the release of L-lysine from [LysW]-gamma-L-lysine and the release of L-ornithine from [LysW]-L-ornithine. In Sulfurisphaera tokodaii (strain DSM 16993 / JCM 10545 / NBRC 100140 / 7) (Sulfolobus tokodaii), this protein is [LysW]-lysine/[LysW]-ornithine hydrolase.